Here is an 88-residue protein sequence, read N- to C-terminus: Small ribosomal subunit protein uS19 (88 aa).

It belongs to the universal ribosomal protein uS19 family.

Protein S19 forms a complex with S13 that binds strongly to the 16S ribosomal RNA. The chain is Small ribosomal subunit protein uS19 from Chlamydia abortus (strain DSM 27085 / S26/3) (Chlamydophila abortus).